A 79-amino-acid polypeptide reads, in one-letter code: Short neurotoxin 4 (79 aa).

The N-terminal stretch at Met-1–Thr-21 is a signal peptide. Intrachain disulfides connect Cys-24–Cys-41, Cys-34–Cys-59, and Cys-63–Cys-71.

It belongs to the three-finger toxin family. Short-chain subfamily. Type III alpha-neurotoxin sub-subfamily. Expressed by the venom gland.

It localises to the secreted. Binds with high affinity to muscle nicotinic acetylcholine receptor (nAChR) and hinders acetylcholine binding to the receptor, thereby impairing neuromuscular transmission. Causes muscle paralysis, spasms and increased respiration. This Pseudonaja textilis (Eastern brown snake) protein is Short neurotoxin 4.